We begin with the raw amino-acid sequence, 320 residues long: ATP-dependent 6-phosphofructokinase (320 aa).

Position 11 (Gly-11) interacts with ATP. 21–25 contributes to the ADP binding site; that stretch reads RAVVR. Residues 72-73 and 102-105 each bind ATP; these read RC and GDGS. Asp-103 contributes to the Mg(2+) binding site. 125–127 serves as a coordination point for substrate; it reads TID. The active-site Proton acceptor is the Asp-127. Arg-154 is a binding site for ADP. Substrate contacts are provided by residues Arg-162 and 169–171; that span reads MGR. ADP is bound by residues 185 to 187 and 214 to 216; these read GAE and KTH. Residues Glu-223, Arg-244, and 250–253 each bind substrate; that span reads HIQR.

This sequence belongs to the phosphofructokinase type A (PFKA) family. ATP-dependent PFK group I subfamily. Prokaryotic clade 'B1' sub-subfamily. In terms of assembly, homotetramer. Mg(2+) serves as cofactor.

The protein localises to the cytoplasm. The catalysed reaction is beta-D-fructose 6-phosphate + ATP = beta-D-fructose 1,6-bisphosphate + ADP + H(+). It functions in the pathway carbohydrate degradation; glycolysis; D-glyceraldehyde 3-phosphate and glycerone phosphate from D-glucose: step 3/4. With respect to regulation, allosterically activated by ADP and other diphosphonucleosides, and allosterically inhibited by phosphoenolpyruvate. In terms of biological role, catalyzes the phosphorylation of D-fructose 6-phosphate to fructose 1,6-bisphosphate by ATP, the first committing step of glycolysis. The polypeptide is ATP-dependent 6-phosphofructokinase (Clostridium botulinum (strain Eklund 17B / Type B)).